Reading from the N-terminus, the 273-residue chain is Homeobox protein Hox-C13b (273 aa).

Residues 201-260 (GRKKRVPYTKIQLKELEKEYAASKFITKDRRRRISATTSLSERQVTIWFQNRRVKEKKFV) constitute a DNA-binding region (homeobox).

Belongs to the Abd-B homeobox family.

The protein resides in the nucleus. Its function is as follows. Sequence-specific transcription factor which is part of a developmental regulatory system that provides cells with specific positional identities on the anterior-posterior axis. Plays a role in early embryonic development. This Danio rerio (Zebrafish) protein is Homeobox protein Hox-C13b (hoxc13b).